The chain runs to 91 residues: Tachykinin-like peptide (91 aa).

Positions 1 to 19 are cleaved as a signal peptide; it reads MKILVAFAVIMLVSAQVLA. A propeptide spanning residues 20-51 is cleaved from the precursor; sequence AEIGLNDEPEWYSDQIQEDLPVFENFLQRIAR. Residue Met62 is modified to Methionine amide. The tract at residues 64–91 is disordered; sequence KRNNGFGQMSRKRSAERNTIHNYERRRK. Positions 66–91 are excised as a propeptide; sequence NNGFGQMSRKRSAERNTIHNYERRRK. Over residues 76–91 the composition is skewed to basic and acidic residues; the sequence is RSAERNTIHNYERRRK.

Expressed by the skin glands.

The protein localises to the secreted. Tachykinins are active peptides which excite neurons, evoke behavioral responses, are potent vasodilators and secretagogues, and contract (directly or indirectly) many smooth muscles. In vitro, induces contraction of guinea pig ileum smooth muscle in a dose-dependent manner. The chain is Tachykinin-like peptide from Theloderma corticale (Kwangsi warty tree frog).